A 487-amino-acid chain; its full sequence is Glutamyl-tRNA(Gln) amidotransferase subunit A (487 aa).

Residues lysine 79 and serine 154 each act as charge relay system in the active site. Residue serine 178 is the Acyl-ester intermediate of the active site.

This sequence belongs to the amidase family. GatA subfamily. As to quaternary structure, heterotrimer of A, B and C subunits.

The catalysed reaction is L-glutamyl-tRNA(Gln) + L-glutamine + ATP + H2O = L-glutaminyl-tRNA(Gln) + L-glutamate + ADP + phosphate + H(+). Functionally, allows the formation of correctly charged Gln-tRNA(Gln) through the transamidation of misacylated Glu-tRNA(Gln) in organisms which lack glutaminyl-tRNA synthetase. The reaction takes place in the presence of glutamine and ATP through an activated gamma-phospho-Glu-tRNA(Gln). In Moorella thermoacetica (strain ATCC 39073 / JCM 9320), this protein is Glutamyl-tRNA(Gln) amidotransferase subunit A.